The sequence spans 438 residues: Trigger factor (438 aa).

The PPIase FKBP-type domain occupies 160–231 (SDQVTIEEQG…IMDVKTKQLQ (72 aa)). Residues 407–438 (AQLSGPQAETVAADQGEQQAEGQEESAEKSEE) form a disordered region. Over residues 418–427 (AADQGEQQAE) the composition is skewed to low complexity.

Belongs to the FKBP-type PPIase family. Tig subfamily.

Its subcellular location is the cytoplasm. The enzyme catalyses [protein]-peptidylproline (omega=180) = [protein]-peptidylproline (omega=0). Involved in protein export. Acts as a chaperone by maintaining the newly synthesized protein in an open conformation. Functions as a peptidyl-prolyl cis-trans isomerase. In Deinococcus deserti (strain DSM 17065 / CIP 109153 / LMG 22923 / VCD115), this protein is Trigger factor.